The sequence spans 1161 residues: Nuclear pore complex-interacting protein family member B11 (1161 aa).

The chain crosses the membrane as a helical span at residues 63–87 (IIIAFPTSYKVVITLWIVYLWVSLL). Disordered stretches follow at residues 278 to 580 (ADDN…DDNI) and 892 to 1161 (SADD…RRLS). Over residues 311 to 321 (PLPPSAPPSAP) the composition is skewed to pro residues. 9 stretches are compositionally biased toward basic and acidic residues: residues 368 to 378 (DNIKTTAERLR), 410 to 420 (DNIKTPAEHLR), 452 to 462 (DNIKTPAERLR), 494 to 504 (DNIKTPAEHLR), 536 to 546 (DNIKTTAEHLR), 918 to 928 (DNIKTPAERLR), 960 to 970 (DNIKTPAERLR), 1002 to 1012 (DNIKTPAERLR), and 1044 to 1054 (DNIKTPAERLR).

Belongs to the NPIP family.

The protein resides in the membrane. This is Nuclear pore complex-interacting protein family member B11 (NPIPB11) from Homo sapiens (Human).